A 589-amino-acid chain; its full sequence is Cytochrome P450 monooxygenase TRI13 (589 aa).

Positions 1 to 21 (MFLSLCLMVLALYLLYKWALP) are cleaved as a signal peptide. N-linked (GlcNAc...) asparagine glycans are attached at residues Asn-52, Asn-219, Asn-243, and Asn-366. Cys-531 is a heme binding site.

Belongs to the cytochrome P450 family. Heme is required as a cofactor.

It functions in the pathway sesquiterpene biosynthesis; trichothecene biosynthesis. Functionally, cytochrome P450 monooxygenase; part of the core gene cluster that mediates the biosynthesis of trichothecenes, a very large family of chemically related bicyclic sesquiterpene compounds acting as mycotoxins, including T2-toxin. The biosynthesis of trichothecenes begins with the cyclization of farnesyl diphosphate to trichodiene and is catalyzed by the trichodiene synthase TRI5. Trichodiene undergoes a series of oxygenations catalyzed by the cytochrome P450 monooxygenase TRI4. TRI4 controls the addition of four oxygens at C-2, C-3, C-11, and the C-12, C-13-epoxide to form the intermediate isotrichotriol. Isotrichotriol then undergoes a non-enzymatic isomerization and cyclization to form isotrichodermol. During this process, the oxygen at the C-2 position becomes the pyran ring oxygen and the hydroxyl group at C-11 is lost. More complex type A trichothecenes are built by modifying isotrichodermol through a series of paired hydroxylation and acetylation or acylation steps. Isotrichodermol is converted to isotrichodermin by the acetyltransferase TRI101. TRI101 encodes a C-3 transacetylase that acts as a self-protection or resistance factor during biosynthesis and that the presence of a free C-3 hydroxyl group is a key component of Fusarium trichothecene phytotoxicity. A second hydroxyl group is added to C-15 by the trichothecene C-15 hydroxylase TRI11, producing 15-decalonectrin, which is then acetylated by TRI3, producing calonectrin. A third hydroxyl group is added at C-4 by the cytochrome P450 monooxygenase TRI13, converting calonectrin to 3,15-diacetoxyspirpenol, which is subsequently acetylated by the acetyltransferase TRI7. A fourth hydroxyl group is added to C-8 by the cytochrome P450 monooxygenase TRI1, followed by the addition of an isovaleryl moiety by TRI16. Finally, the acetyl group is removed from the C-3 position by the trichothecene C-3 esterase TRI8 to produce T-2 toxin. This is Cytochrome P450 monooxygenase TRI13 from Fusarium sporotrichioides.